A 1036-amino-acid polypeptide reads, in one-letter code: uncharacterized protein (1036 aa).

2 consecutive transmembrane segments (helical) span residues 4–24 (YLFI…NASL) and 1004–1024 (ILWV…VLFL).

It belongs to the MG414/MG415 family.

The protein resides in the cell membrane. This is an uncharacterized protein from Mycoplasma genitalium (strain ATCC 33530 / DSM 19775 / NCTC 10195 / G37) (Mycoplasmoides genitalium).